We begin with the raw amino-acid sequence, 357 residues long: COP9 signalosome complex subunit 5a (357 aa).

M1 is subject to N-acetylmethionine. Positions 59 to 196 (VHISALALLK…IGAFRTYPEG (138 aa)) constitute an MPN domain. Zn(2+)-binding residues include H142, H144, and D155. The JAMM motif signature appears at 142–155 (HSHPGYGCWLSGID). Positions 338 to 357 (ARQSKKSADDSSDPEPMITS) are disordered.

It belongs to the peptidase M67A family. CSN5 subfamily. In terms of assembly, component of the CSN complex, probably composed of CSN1, CSN2, CSN3, CSN4, CSN5 (CSN5A or CSN5B), CSN6 (CSN6A or CSN6B), CSN7 and CSN8. CSN5A or CSN5B are present within distinct CSN complexes each containing only one copy of CSN5. Interacts with itself. In the complex, it is located in the center and probably interacts directly with CSN4 and CSN6A or CSN6B. Present also in subcomplex forms which inculdes CSN3. Also exists as monomeric form. Interacts with CYT1 in vitro, but not in planta. It depends on a divalent metal cation as a cofactor. As to expression, ubiquitously expressed. Highly expressed in flowers and roots. Expressed at lower level in seedlings and siliques.

It localises to the cytoplasm. Its subcellular location is the nucleus. Probable protease subunit of the COP9 signalosome complex (CSN), a complex involved in various cellular and developmental processes such as photomorphogenesis and auxin and jasmonate responses. The CSN complex is an essential regulator of the ubiquitin (Ubl) conjugation pathway by mediating the deneddylation of the cullin subunits of the SCF-type E3 ligase complexes, leading to decrease the Ubl ligase activity of SCF. In the complex, it probably acts as the catalytic center that mediates the cleavage of Nedd8 from cullins. It however has no metalloprotease activity by itself and requires the other subunits of the CSN complex. The CSN complex is involved in repression of photomorphogenesis in darkness by regulating the activity of COP1-containing Ubl ligase complexes. The complex is also required for degradation of PSIAA6 by regulating the activity of the Ubl ligase SCF-TIR complex. Involved in CSN's deneddylation/derubylation activity. Required for the deneddylation of all cullins. Essential for the structural integrity of the CSN holocomplex. The polypeptide is COP9 signalosome complex subunit 5a (Arabidopsis thaliana (Mouse-ear cress)).